The following is a 146-amino-acid chain: Snaclec 5 (146 aa).

The first 23 residues, Met1 to Ala23, serve as a signal peptide directing secretion. 3 cysteine pairs are disulfide-bonded: Cys25–Cys36, Cys53–Cys142, and Cys119–Cys134. A C-type lectin domain is found at Tyr32 to Lys143.

This sequence belongs to the snaclec family. Heterodimer; disulfide-linked. Expressed by the venom gland.

The protein resides in the secreted. Functionally, interferes with one step of hemostasis (modulation of platelet aggregation, or coagulation cascade, for example). This chain is Snaclec 5, found in Echis pyramidum leakeyi (Leakey's carpet viper).